The sequence spans 222 residues: Glutathione S-transferase A5 (222 aa).

An N-acetylalanine modification is found at Ala2. The GST N-terminal domain maps to 3 to 83 (EKPKLHYSNA…YIASKYNLYG (81 aa)). Lys4 bears the N6-succinyllysine mark. Residues Tyr9, Arg45, 54-55 (QV), and 67-68 (QT) contribute to the glutathione site. The GST C-terminal domain maps to 85–208 (DMKERALIDM…QPGSQRKPPM (124 aa)).

The protein belongs to the GST superfamily. Alpha family. Homodimer. Expression not detected.

It is found in the cytoplasm. It carries out the reaction RX + glutathione = an S-substituted glutathione + a halide anion + H(+). This is Glutathione S-transferase A5 (GSTA5) from Homo sapiens (Human).